The sequence spans 312 residues: Pantothenate kinase (312 aa).

97–104 (GSVAVGKS) lines the ATP pocket.

Belongs to the prokaryotic pantothenate kinase family.

It is found in the cytoplasm. The enzyme catalyses (R)-pantothenate + ATP = (R)-4'-phosphopantothenate + ADP + H(+). It functions in the pathway cofactor biosynthesis; coenzyme A biosynthesis; CoA from (R)-pantothenate: step 1/5. In Mycolicibacterium vanbaalenii (strain DSM 7251 / JCM 13017 / BCRC 16820 / KCTC 9966 / NRRL B-24157 / PYR-1) (Mycobacterium vanbaalenii), this protein is Pantothenate kinase.